A 453-amino-acid chain; its full sequence is Cytochrome P450 monooxygenase PC-20 (453 aa).

Transmembrane regions (helical) follow at residues 5 to 25 (LGPF…LCVI) and 49 to 69 (LGVV…LFCV). Cysteine 387 contributes to the heme binding site.

It belongs to the cytochrome P450 family. Heme serves as cofactor.

Its subcellular location is the membrane. The protein operates within secondary metabolite biosynthesis. Cytochrome P450 monooxygenase; part of the gene cluster that mediates the biosynthesis of the indole diterpenes penitrems. The geranylgeranyl diphosphate (GGPP) synthase penG catalyzes the first step in penitrem biosynthesis via conversion of farnesyl pyrophosphate and isopentyl pyrophosphate into geranylgeranyl pyrophosphate (GGPP). Condensation of indole-3-glycerol phosphate with GGPP by the prenyl transferase penC then forms 3-geranylgeranylindole (3-GGI). Epoxidation by the FAD-dependent monooxygenase penM leads to a epoxidized-GGI that is substrate of the terpene cyclase penB for cyclization to yield paspaline. Paspaline is subsequently converted to 13-desoxypaxilline by the cytochrome P450 monooxygenase penP, the latter being then converted to paxilline by the cytochrome P450 monooxygenase penQ. Paxilline is converted to beta-paxitriol via C-10 ketoreduction by the short-chain dehydrogenase PC-15 which can be monoprenylated at the C-20 by the indole diterpene prenyltransferase penD. A two-step elimination (acetylation and elimination) process performed by the O-acetyltransferase PC-16 and the P.simplicissimum ptmI-ortholog not yet identified in P.crustosum, leads to the production of the prenylated form of penijanthine. The FAD-linked oxidoreductase ptmO then converts the prenylated form of penijanthine into PC-M5 which is in turn transformed into PC-M4 by the aromatic dimethylallyltransferase PC-22. A series of oxidation steps involving 4 cytochrome P450 monooxygenases (PC-21, PC-05, PC-23, PC-20) and a FAD-dependent monooxygenase (PC-14) are required for the transformation of PC-M4 to penitrems A and E. Synthesis of these final products is proposed to proceed via penitrems D and C (PC-21, PC-05, PC-14) and penitrems B and F (PC-21, PC-05, PC-14, PC-23). The chain is Cytochrome P450 monooxygenase PC-20 from Penicillium crustosum (Blue mold fungus).